A 322-amino-acid polypeptide reads, in one-letter code: NADH-cytochrome b5 reductase 2 (322 aa).

The helical transmembrane segment at 30–46 (LAPVYVAVGLAGLGVGL) threads the bilayer. An FAD-binding FR-type domain is found at 71–176 (QGWVNLKLSD…KGPLPKYPWE (106 aa)). 179–214 (KHKHICLVAGGTGITPMYQLAREIFKNPEDKTKVTL) serves as a coordination point for FAD.

This sequence belongs to the flavoprotein pyridine nucleotide cytochrome reductase family. Requires FAD as cofactor.

Its subcellular location is the mitochondrion outer membrane. It catalyses the reaction 2 Fe(III)-[cytochrome b5] + NADH = 2 Fe(II)-[cytochrome b5] + NAD(+) + H(+). In terms of biological role, may mediate the reduction of outer membrane cytochrome b5. This is NADH-cytochrome b5 reductase 2 (mcr1) from Emericella nidulans (strain FGSC A4 / ATCC 38163 / CBS 112.46 / NRRL 194 / M139) (Aspergillus nidulans).